Reading from the N-terminus, the 83-residue chain is Defensin-1 (83 aa).

The first 33 residues, 1-33, serve as a signal peptide directing secretion; it reads MAGKGVGSRLSTLFLLVLLVITIGMMQVQVAEG. Disulfide bonds link cysteine 36/cysteine 82, cysteine 47/cysteine 67, cysteine 53/cysteine 76, and cysteine 57/cysteine 78.

The protein belongs to the DEFL family.

It localises to the secreted. Plant defense peptide. Has antifungal activity against B.cinera, F.oxysporum, F.solani and H.annosum with IC(50) values of 0.4 ug/ml, 2.9 ug/ml, 0.9 ug/ml and 1.4 ug/ml, respectively. Has modest antifungal activity against C.albicans and T.reesei. Causes thickening of F.oxysporum hyphae and an increase in their branching. Lacks antibacterial activity against the Gram-negative bacteria E.coli and E.carotovora. This Pinus sylvestris (Scotch pine) protein is Defensin-1.